A 192-amino-acid chain; its full sequence is CASP-like protein 2U1 (192 aa).

Residues 1–11 (MASRKQGAREG) lie on the Cytoplasmic side of the membrane. The helical transmembrane segment at 12 to 32 (LWSMGVRLLTTLLCITSLILL) threads the bilayer. The Extracellular segment spans residues 33-58 (LKAKQTVRRALGLGYIAQTVKYSDTS). The chain crosses the membrane as a helical span at residues 59–79 (GFIYLVYINILVAAYGLIVFV). The Cytoplasmic segment spans residues 80-96 (SLIPSALGKSCSGKCSR). The chain crosses the membrane as a helical span at residues 97–117 (WTIFVLDQVFAYVLLSAVSAA). The Extracellular segment spans residues 118-145 (TEVLYLADKGMSKTQWEALCPTYGFFCH). A helical membrane pass occupies residues 146–166 (MVSASVAIGSVAVVLLAVLSV). Residues 167-192 (SSAQSLFHNFYTRALYTTKMRHSSLT) are Cytoplasmic-facing.

This sequence belongs to the Casparian strip membrane proteins (CASP) family. As to quaternary structure, homodimer and heterodimers.

The protein localises to the cell membrane. This is CASP-like protein 2U1 from Adiantum capillus-veneris (Maidenhair fern).